We begin with the raw amino-acid sequence, 310 residues long: tRNA pseudouridine synthase B (310 aa).

The active-site Nucleophile is D49.

This sequence belongs to the pseudouridine synthase TruB family. Type 1 subfamily.

The catalysed reaction is uridine(55) in tRNA = pseudouridine(55) in tRNA. Its function is as follows. Responsible for synthesis of pseudouridine from uracil-55 in the psi GC loop of transfer RNAs. The sequence is that of tRNA pseudouridine synthase B from Rhizobium johnstonii (strain DSM 114642 / LMG 32736 / 3841) (Rhizobium leguminosarum bv. viciae).